A 562-amino-acid chain; its full sequence is Dihydroxy-acid dehydratase (562 aa).

Position 80 (aspartate 80) interacts with Mg(2+). Position 121 (cysteine 121) interacts with [2Fe-2S] cluster. Mg(2+)-binding residues include aspartate 122 and lysine 123. Lysine 123 carries the post-translational modification N6-carboxylysine. [2Fe-2S] cluster is bound at residue cysteine 194. Glutamate 446 provides a ligand contact to Mg(2+). The active-site Proton acceptor is serine 472.

It belongs to the IlvD/Edd family. In terms of assembly, homodimer. It depends on [2Fe-2S] cluster as a cofactor. The cofactor is Mg(2+).

It carries out the reaction (2R)-2,3-dihydroxy-3-methylbutanoate = 3-methyl-2-oxobutanoate + H2O. The enzyme catalyses (2R,3R)-2,3-dihydroxy-3-methylpentanoate = (S)-3-methyl-2-oxopentanoate + H2O. It participates in amino-acid biosynthesis; L-isoleucine biosynthesis; L-isoleucine from 2-oxobutanoate: step 3/4. The protein operates within amino-acid biosynthesis; L-valine biosynthesis; L-valine from pyruvate: step 3/4. Functions in the biosynthesis of branched-chain amino acids. Catalyzes the dehydration of (2R,3R)-2,3-dihydroxy-3-methylpentanoate (2,3-dihydroxy-3-methylvalerate) into 2-oxo-3-methylpentanoate (2-oxo-3-methylvalerate) and of (2R)-2,3-dihydroxy-3-methylbutanoate (2,3-dihydroxyisovalerate) into 2-oxo-3-methylbutanoate (2-oxoisovalerate), the penultimate precursor to L-isoleucine and L-valine, respectively. The sequence is that of Dihydroxy-acid dehydratase from Staphylococcus haemolyticus (strain JCSC1435).